A 246-amino-acid polypeptide reads, in one-letter code: MSSPIVLIFGAGANIGYNVAKEFVASGYKAVLTSRKAPTEPDASFSYVQGDLSDPKSVTDTFSQVRKQFGEPSVVVYNGNSKWHSNKEIAAAVSFTAKEDPFVVDLPTFEKDLNINTTSTFVAIKEALASFAALPETASRTFIYTGNAMNFLPFGGAMTLGAGKSASAHMIAAAAAAYAPKGYKFYYPDERQPDGRLGGRGISGEAHAKIYKKLSEDKTQGPWLQTFVKGTGYVSFPADTDVSVAH.

4 residues coordinate NADP(+): isoleucine 15, serine 34, lysine 125, and lysine 164. The Lowers pKa of active site Tyr role is filled by lysine 164.

Belongs to the short-chain dehydrogenases/reductases (SDR) family.

The protein operates within secondary metabolite biosynthesis. Short chain dehydrogenase/reductase; part of the gene cluster that mediates the biosynthesis of the dimeric xanthones cryptosporioptides. The pathway begins with the synthesis of atrochrysone thioester by the polyketide synthase dmx-nrPKS. The atrochrysone carboxyl ACP thioesterase dmxR1 then breaks the thioester bond and releases the atrochrysone carboxylic acid from dmx-nrPKS. Atrochrysone carboxylic acid is decarboxylated by the decarboxylase dmxR15, and oxidized by the anthrone oxygenase dmxR16 to yield emodin. Emodin is then reduced to emodin hydroquinone by the oxidoreductase dmxR7. A-ring reduction by the short chain dehydrogenase dmxR18, dehydration by the scytalone dehydratase-like protein dmxR17 and probable spontaneous re-oxidation, results in overall deoxygenation to chrysophanol. Baeyer-Villiger oxidation by the Baeyer-Villiger monooxygenase (BVMO) dmxR6 then yields monodictylactone in equilibrium with monodictyphenone. In the case of the cryptosporioptides biosynthesis, monodictylactone is reduced at C-12 to an alcohol (by the short chain dehydrogenases dmxR12 or dmxR8) and hydroxylated at C-5 by dmxR9, yielding the electron-rich aromatic which could eliminate H(2)O to form the ortho-quinonemethide, followed by tautomerisation to paraquinone and complete the formal reduction to produce the 10-methylgroup. Conjugate addition of C-4a-OH to the resulting paraquinone by the monooxygenase dmxR10 then gives cyclohexadienone, which is then reduced at C-5 by the short chain dehydrogenase dmxR3 to give the dihydroxanthone. The 6,7-epoxide in the cryptosporioptides could be introduced by the cytochrome P450 monooxygenase dmxL3. The highly reducing PKS dmxL2 manufactures butyrate, which is further carboxylated by dmxL1 to form ethylmalonate. It is not yet clear whether the carboxylation occurs while the butyrate is attached to the ACP of dmxL2, but this unusual fungal metabolite could then be esterified to O-5 by the O-acetyltransferase dmxR13. Finally, dimerization performed by dmxR5 gives the observed dimers cryptosporioptides A, B and C as the final products of the pathway. This is Short chain dehydrogenase/reductase dmxR12 from Cryptosporiopsis sp. (strain 8999).